The following is a 203-amino-acid chain: Large ribosomal subunit protein uL22 (203 aa).

2 stretches are compositionally biased toward polar residues: residues 116–126 and 134–167; these read QNGGESQNQEY and VSKS…DSQL. Residues 116–203 are disordered; the sequence is QNGGESQNQE…TVLAQEKEVK (88 aa). A compositionally biased stretch (low complexity) spans 168 to 194; the sequence is SAKTNSTTTAKKTDLADNNTKNDATNT.

This sequence belongs to the universal ribosomal protein uL22 family. Part of the 50S ribosomal subunit.

Its function is as follows. This protein binds specifically to 23S rRNA; its binding is stimulated by other ribosomal proteins, e.g. L4, L17, and L20. It is important during the early stages of 50S assembly. It makes multiple contacts with different domains of the 23S rRNA in the assembled 50S subunit and ribosome. In terms of biological role, the globular domain of the protein is located near the polypeptide exit tunnel on the outside of the subunit, while an extended beta-hairpin is found that lines the wall of the exit tunnel in the center of the 70S ribosome. This Mesomycoplasma hyopneumoniae (strain 232) (Mycoplasma hyopneumoniae) protein is Large ribosomal subunit protein uL22.